A 120-amino-acid polypeptide reads, in one-letter code: Large ribosomal subunit protein uL18 (120 aa).

This sequence belongs to the universal ribosomal protein uL18 family. In terms of assembly, part of the 50S ribosomal subunit; part of the 5S rRNA/L5/L18/L25 subcomplex. Contacts the 5S and 23S rRNAs.

Its function is as follows. This is one of the proteins that bind and probably mediate the attachment of the 5S RNA into the large ribosomal subunit, where it forms part of the central protuberance. The protein is Large ribosomal subunit protein uL18 of Xanthobacter autotrophicus (strain ATCC BAA-1158 / Py2).